The following is a 324-amino-acid chain: Formimidoylglutamase (324 aa).

Residues His124, Asp153, His155, Asp157, Asp245, and Asp247 each contribute to the Mn(2+) site.

This sequence belongs to the arginase family. Mn(2+) is required as a cofactor.

The enzyme catalyses N-formimidoyl-L-glutamate + H2O = formamide + L-glutamate. It participates in amino-acid degradation; L-histidine degradation into L-glutamate; L-glutamate from N-formimidoyl-L-glutamate (hydrolase route): step 1/1. Functionally, catalyzes the conversion of N-formimidoyl-L-glutamate to L-glutamate and formamide. In Hahella chejuensis (strain KCTC 2396), this protein is Formimidoylglutamase.